Here is a 79-residue protein sequence, read N- to C-terminus: Translational regulator CsrA (79 aa).

This sequence belongs to the CsrA/RsmA family. Homodimer; the beta-strands of each monomer intercalate to form a hydrophobic core, while the alpha-helices form wings that extend away from the core.

The protein localises to the cytoplasm. Its function is as follows. A translational regulator that binds mRNA to regulate translation initiation and/or mRNA stability. Usually binds in the 5'-UTR at or near the Shine-Dalgarno sequence preventing ribosome-binding, thus repressing translation. Its main target seems to be the major flagellin gene, while its function is anatagonized by FliW. The sequence is that of Translational regulator CsrA from Leptospira biflexa serovar Patoc (strain Patoc 1 / Ames).